The sequence spans 260 residues: GDNF family receptor alpha-4 (260 aa).

An N-terminal signal peptide occupies residues Met1–Gly23. An N-linked (GlcNAc...) asparagine glycan is attached at Asn184. Thr237 is lipidated: GPI-anchor amidated threonine. Positions Ala238 to Leu260 are cleaved as a propeptide — removed in mature form.

The protein belongs to the GDNFR family. Interacts with ARTN ligand and RET: forms a 2:2:2 ternary complex composed of ARTN ligand, GFRA3 and RET receptor. Interacts with SORL1. Expressed in many tissues including adrenal medulla, brain neurons, with highest levels in the cerebral cortex and hippocampus. Moderate levels found in the gut circular muscle and myenteric ganglia as well as in other peripheral ganglia, including the sensory dorsal root and trigeminal as well as superior cervical and sympathetic chain ganglia. Isoform a1, isoform a2, isoform b1 and isoform b2 are exclusively found in the thyroid, parthyroid and pituitary glands.

Its subcellular location is the cell membrane. It is found in the secreted. In terms of biological role, receptor for persephin (PSPN), a growth factor that exhibits neurotrophic activity on mesencephalic dopaminergic and motor neurons. Acts by binding to its coreceptor, GFRA4, leading to autophosphorylation and activation of the RET receptor. May be important in C-cell development and, in the postnatal development of the adrenal medulla. The protein is GDNF family receptor alpha-4 (Gfra4) of Mus musculus (Mouse).